Here is a 512-residue protein sequence, read N- to C-terminus: Ribose import ATP-binding protein RbsA 1 (512 aa).

ABC transporter domains lie at 8–244 (FRME…IGRE) and 257–502 (PEEK…LNIG). ATP is bound at residue 40-47 (GENGAGKS).

This sequence belongs to the ABC transporter superfamily. Ribose importer (TC 3.A.1.2.1) family. In terms of assembly, the complex is composed of an ATP-binding protein (RbsA), two transmembrane proteins (RbsC) and a solute-binding protein (RbsB).

Its subcellular location is the cell inner membrane. It catalyses the reaction D-ribose(out) + ATP + H2O = D-ribose(in) + ADP + phosphate + H(+). In terms of biological role, part of the ABC transporter complex RbsABC involved in ribose import. Responsible for energy coupling to the transport system. The polypeptide is Ribose import ATP-binding protein RbsA 1 (Rhizobium etli (strain ATCC 51251 / DSM 11541 / JCM 21823 / NBRC 15573 / CFN 42)).